The sequence spans 476 residues: Aspartyl/glutamyl-tRNA(Asn/Gln) amidotransferase subunit B (476 aa).

It belongs to the GatB/GatE family. GatB subfamily. As to quaternary structure, heterotrimer of A, B and C subunits.

It catalyses the reaction L-glutamyl-tRNA(Gln) + L-glutamine + ATP + H2O = L-glutaminyl-tRNA(Gln) + L-glutamate + ADP + phosphate + H(+). The catalysed reaction is L-aspartyl-tRNA(Asn) + L-glutamine + ATP + H2O = L-asparaginyl-tRNA(Asn) + L-glutamate + ADP + phosphate + 2 H(+). Allows the formation of correctly charged Asn-tRNA(Asn) or Gln-tRNA(Gln) through the transamidation of misacylated Asp-tRNA(Asn) or Glu-tRNA(Gln) in organisms which lack either or both of asparaginyl-tRNA or glutaminyl-tRNA synthetases. The reaction takes place in the presence of glutamine and ATP through an activated phospho-Asp-tRNA(Asn) or phospho-Glu-tRNA(Gln). The chain is Aspartyl/glutamyl-tRNA(Asn/Gln) amidotransferase subunit B from Clostridium botulinum (strain Okra / Type B1).